We begin with the raw amino-acid sequence, 395 residues long: Phosphopentomutase (395 aa).

Mn(2+) is bound by residues aspartate 14, aspartate 289, histidine 294, aspartate 330, histidine 331, and histidine 342.

Belongs to the phosphopentomutase family. The cofactor is Mn(2+).

The protein resides in the cytoplasm. The enzyme catalyses 2-deoxy-alpha-D-ribose 1-phosphate = 2-deoxy-D-ribose 5-phosphate. It catalyses the reaction alpha-D-ribose 1-phosphate = D-ribose 5-phosphate. It functions in the pathway carbohydrate degradation; 2-deoxy-D-ribose 1-phosphate degradation; D-glyceraldehyde 3-phosphate and acetaldehyde from 2-deoxy-alpha-D-ribose 1-phosphate: step 1/2. Functionally, isomerase that catalyzes the conversion of deoxy-ribose 1-phosphate (dRib-1-P) and ribose 1-phosphate (Rib-1-P) to deoxy-ribose 5-phosphate (dRib-5-P) and ribose 5-phosphate (Rib-5-P), respectively. This is Phosphopentomutase from Mycoplasmopsis pulmonis (strain UAB CTIP) (Mycoplasma pulmonis).